The primary structure comprises 178 residues: CASP-like protein 4D1 (178 aa).

Residues 1 to 14 are Cytoplasmic-facing; sequence MAPPPPSPPSVTLR. A helical membrane pass occupies residues 15–35; it reads TVLLLLRVLTAAFLVITVVLI. Residues 36 to 60 lie on the Extracellular side of the membrane; it reads STNTVTLEVSSTSIKMRFNDVYAYR. Residues 61–81 traverse the membrane as a helical segment; that stretch reads YMLSAAVIGLLYAVVQLFLTI. At 82-149 the chain is on the cytoplasmic side; it reads SQFATGTTHP…KFFSKGYASA (68 aa). A helical membrane pass occupies residues 150–170; sequence SLLLFAFVSLAVLSVFSSLAL. Residues 171–178 lie on the Extracellular side of the membrane; that stretch reads SKRPIQVS.

This sequence belongs to the Casparian strip membrane proteins (CASP) family. In terms of assembly, homodimer and heterodimers.

It is found in the cell membrane. The polypeptide is CASP-like protein 4D1 (Arabidopsis lyrata subsp. lyrata (Lyre-leaved rock-cress)).